A 414-amino-acid chain; its full sequence is Transcription factor FAMA (414 aa).

Disordered regions lie at residues 1-61 (MDKD…TPFD) and 142-197 (KEDQ…SQRM). Low complexity-rich tracts occupy residues 12 to 24 (GESS…NSSG) and 35 to 49 (QQQQ…QQHQ). Residues 166-175 (RENKNVTKKE) show a composition bias toward basic and acidic residues. Residues 176 to 185 (VKSKRKRART) are compositionally biased toward basic residues. Over residues 187–197 (KTSEEVESQRM) the composition is skewed to basic and acidic residues. Residues 194-245 (SQRMTHIAVERNRRKQMNEHLRVLRSLMPGSYVQRGDQASIIGGAIEFVREL) enclose the bHLH domain. The short motif at 249-253 (LQCLE) is the LxCxE motif element.

As to quaternary structure, interacts with FAMA through its LxCxE motif. Self-interacts. Also interacts with bHLH071 and bHLH093. Interacts with RBR1. As to expression, resctricted to stomatal cell lineages (at protein level). Expressed in roots, leaves, stems, and flowers.

It localises to the nucleus. Its function is as follows. Transcription activator. Together with MYB88 and MYB124, ensures that stomata contain just two guard cells (GCs) by enforcing a single symmetric precursor cell division before stomatal maturity. Together with SPCH and MUTE, regulates the stomata formation. Required to promote differentiation and morphogenesis of stomatal guard cells and to halt proliferative divisions in their immediate precursors. Mediates the formation of stomata. Prevents histone H3K27me3 marks and derepresses stem cell gene expression. In Arabidopsis thaliana (Mouse-ear cress), this protein is Transcription factor FAMA (FAMA).